The following is a 408-amino-acid chain: Apoptosis-inducing factor homolog A (408 aa).

Residues 34 to 38 (GCGFG), Arg69, and Asp314 each bind FAD.

Belongs to the FAD-dependent oxidoreductase family. It depends on FAD as a cofactor.

Its function is as follows. Putative FAD-dependent oxidoreductase. The protein is Apoptosis-inducing factor homolog A (aifA) of Dictyostelium discoideum (Social amoeba).